A 529-amino-acid polypeptide reads, in one-letter code: Peptide chain release factor 3 (529 aa).

A tr-type G domain is found at 11–280 (AKRRTFAIIS…GLVEWAPAPM (270 aa)). GTP is bound by residues 20 to 27 (SHPDAGKT), 88 to 92 (DTPGH), and 142 to 145 (NKLD).

This sequence belongs to the TRAFAC class translation factor GTPase superfamily. Classic translation factor GTPase family. PrfC subfamily.

It is found in the cytoplasm. Increases the formation of ribosomal termination complexes and stimulates activities of RF-1 and RF-2. It binds guanine nucleotides and has strong preference for UGA stop codons. It may interact directly with the ribosome. The stimulation of RF-1 and RF-2 is significantly reduced by GTP and GDP, but not by GMP. The sequence is that of Peptide chain release factor 3 from Shigella boydii serotype 18 (strain CDC 3083-94 / BS512).